The following is a 178-amino-acid chain: Gamma-crystallin S (178 aa).

S2 bears the N-acetylserine mark. Residues 2–5 form an N-terminal arm region; it reads SKAG. Beta/gamma crystallin 'Greek key' domains are found at residues 6–44 and 45–87; these read TKITFFEDKNFQGRHYDSDCDCADFHMYLSRCNSIRVEG and GTWA…RAVH. The segment at 88-93 is connecting peptide; it reads LSSGGQ. Beta/gamma crystallin 'Greek key' domains lie at 94-134 and 135-177; these read YKLQ…KVLE and GAWI…RRIV.

The protein belongs to the beta/gamma-crystallin family. In terms of assembly, monomer.

Its function is as follows. Crystallins are the dominant structural components of the vertebrate eye lens. The sequence is that of Gamma-crystallin S (CRYGS) from Bos taurus (Bovine).